A 189-amino-acid polypeptide reads, in one-letter code: RxLR effector protein CRE18 (189 aa).

An N-terminal signal peptide occupies residues 1-23; the sequence is MSKLFYAFAVLAVHVLTSSPTTA. The short motif at 47-68 is the RxLR-dEER element; sequence RFLRSIHEGEDSLKPSAFSEER.

Belongs to the RxLR effector family.

The protein resides in the secreted. It is found in the host cytoplasm. The protein localises to the host nucleus. Effector that is involved in host plant infection. Contributes to virulence during the early infection stage, by inhibiting plant defense responses induced by both PAMP-triggered immunity (PTI) and effector-triggered immunity (ETI). This chain is RxLR effector protein CRE18, found in Phytophthora infestans (strain T30-4) (Potato late blight agent).